The primary structure comprises 65 residues: Large ribosomal subunit protein uL30 (65 aa).

Belongs to the universal ribosomal protein uL30 family. Part of the 50S ribosomal subunit.

The polypeptide is Large ribosomal subunit protein uL30 (Aster yellows witches'-broom phytoplasma (strain AYWB)).